The following is a 152-amino-acid chain: Acidic phospholipase A2 57 (152 aa).

A signal peptide spans 1–21 (MYPAHLLGLLAVCVSLLGAAS). Residues 22–27 (IPPLPL) constitute a propeptide that is removed on maturation. 7 disulfides stabilise this stretch: C38–C104, C54–C151, C56–C72, C71–C132, C78–C125, C88–C118, and C111–C123. Positions 55, 57, and 59 each coordinate Ca(2+). H75 is a catalytic residue. Position 76 (D76) interacts with Ca(2+). The active site involves D126.

Belongs to the phospholipase A2 family. Group I subfamily. D49 sub-subfamily. Ca(2+) is required as a cofactor. In terms of tissue distribution, expressed by the venom gland.

Its subcellular location is the secreted. It catalyses the reaction a 1,2-diacyl-sn-glycero-3-phosphocholine + H2O = a 1-acyl-sn-glycero-3-phosphocholine + a fatty acid + H(+). PLA2 catalyzes the calcium-dependent hydrolysis of the 2-acyl groups in 3-sn-phosphoglycerides. This chain is Acidic phospholipase A2 57, found in Hydrophis hardwickii (Hardwick's spine-bellied seasnake).